The following is a 151-amino-acid chain: D-aminoacyl-tRNA deacylase (151 aa).

A Gly-cisPro motif, important for rejection of L-amino acids motif is present at residues 137 to 138 (GP).

Belongs to the DTD family. Homodimer.

The protein localises to the cytoplasm. The catalysed reaction is glycyl-tRNA(Ala) + H2O = tRNA(Ala) + glycine + H(+). It catalyses the reaction a D-aminoacyl-tRNA + H2O = a tRNA + a D-alpha-amino acid + H(+). In terms of biological role, an aminoacyl-tRNA editing enzyme that deacylates mischarged D-aminoacyl-tRNAs. Also deacylates mischarged glycyl-tRNA(Ala), protecting cells against glycine mischarging by AlaRS. Acts via tRNA-based rather than protein-based catalysis; rejects L-amino acids rather than detecting D-amino acids in the active site. By recycling D-aminoacyl-tRNA to D-amino acids and free tRNA molecules, this enzyme counteracts the toxicity associated with the formation of D-aminoacyl-tRNA entities in vivo and helps enforce protein L-homochirality. This chain is D-aminoacyl-tRNA deacylase, found in Geobacter metallireducens (strain ATCC 53774 / DSM 7210 / GS-15).